Consider the following 201-residue polypeptide: Recombination protein RecR (201 aa).

The C4-type zinc-finger motif lies at 57-72; it reads CADCRTFTEQEVCNIC. A Toprim domain is found at 81 to 176; sequence GQICVVESPA…DASRIAHGVP (96 aa).

The protein belongs to the RecR family.

In terms of biological role, may play a role in DNA repair. It seems to be involved in an RecBC-independent recombinational process of DNA repair. It may act with RecF and RecO. This is Recombination protein RecR from Klebsiella pneumoniae subsp. pneumoniae (strain ATCC 700721 / MGH 78578).